The following is a 148-amino-acid chain: Ribonuclease 4 (148 aa).

The first 29 residues, 1–29 (MMDLQRTQSLLLLLVLTLLGLGLVQPSYG), serve as a signal peptide directing secretion. Glutamine 30 bears the Pyrrolidone carboxylic acid mark. DUMP contacts are provided by arginine 36, histidine 41, lysine 69, asparagine 72, and threonine 73. Histidine 41 acts as the Proton acceptor in catalysis. Cystine bridges form between cysteine 54-cysteine 110, cysteine 68-cysteine 121, cysteine 86-cysteine 136, and cysteine 93-cysteine 100. The active-site Proton donor is histidine 145. Phenylalanine 146 serves as a coordination point for dUMP.

The protein belongs to the pancreatic ribonuclease family. Expressed in the cortical tubules of the kidney (at protein level). Also expressed in the medullary tubules of the kidney.

It is found in the secreted. Its function is as follows. Cleaves preferentially after uridine bases. Has antimicrobial activity against uropathogenic E.coli (UPEC). Probably contributes to urinary tract sterility. The chain is Ribonuclease 4 (Rnase4) from Mus musculus (Mouse).